We begin with the raw amino-acid sequence, 178 residues long: Nicotinamide-nucleotide adenylyltransferase (178 aa).

Belongs to the archaeal NMN adenylyltransferase family.

It localises to the cytoplasm. The catalysed reaction is beta-nicotinamide D-ribonucleotide + ATP + H(+) = diphosphate + NAD(+). It participates in cofactor biosynthesis; NAD(+) biosynthesis; NAD(+) from nicotinamide D-ribonucleotide: step 1/1. The chain is Nicotinamide-nucleotide adenylyltransferase from Thermoplasma volcanium (strain ATCC 51530 / DSM 4299 / JCM 9571 / NBRC 15438 / GSS1).